The sequence spans 1335 residues: Aldehyde oxidase 2 (1335 aa).

In terms of domain architecture, 2Fe-2S ferredoxin-type spans 8-95 (DVLVFFVNGR…GAAVTTVEGV (88 aa)). [2Fe-2S] cluster-binding residues include Cys-47, Cys-52, Cys-55, and Cys-77. Gln-116 lines the Mo-molybdopterin pocket. [2Fe-2S] cluster contacts are provided by Cys-117, Cys-120, Cys-152, and Cys-154. Position 154 (Cys-154) interacts with Mo-molybdopterin. The region spanning 242 to 427 (FRGDRVTWVS…ESVHIPHSQK (186 aa)) is the FAD-binding PCMH-type domain. FAD contacts are provided by residues 270-277 (LVLGNTAL), Ala-351, Ser-360, His-364, Asp-373, and Leu-417. Mo-molybdopterin-binding positions include 821–822 (GF), 1103–1106 (ASVG), Gln-1218, and Leu-1285. Glu-1287 functions as the Proton acceptor; for azaheterocycle hydroxylase activity in the catalytic mechanism.

The protein belongs to the xanthine dehydrogenase family. In terms of assembly, homodimer. Requires [2Fe-2S] cluster as cofactor. FAD serves as cofactor. It depends on Mo-molybdopterin as a cofactor. As to expression, detected in kidney, Harderian gland and olfactory mucosa.

Its subcellular location is the cytoplasm. The catalysed reaction is an aldehyde + O2 + H2O = a carboxylate + H2O2 + H(+). Its function is as follows. Oxidase with broad substrate specificity, oxidizing aromatic azaheterocycles, such as phthalazine, as well as aldehydes, such as benzaldehyde and retinal. In Cavia porcellus (Guinea pig), this protein is Aldehyde oxidase 2 (AOX2).